Reading from the N-terminus, the 215-residue chain is 3,4-dihydroxy-2-butanone 4-phosphate synthase (215 aa).

Residues 38-39 (RE), aspartate 43, 151-155 (RRGHT), and glutamate 175 contribute to the D-ribulose 5-phosphate site. Glutamate 39 serves as a coordination point for Mg(2+). Histidine 154 is a Mg(2+) binding site.

This sequence belongs to the DHBP synthase family. As to quaternary structure, homodimer. The cofactor is Mg(2+). Requires Mn(2+) as cofactor.

It carries out the reaction D-ribulose 5-phosphate = (2S)-2-hydroxy-3-oxobutyl phosphate + formate + H(+). The protein operates within cofactor biosynthesis; riboflavin biosynthesis; 2-hydroxy-3-oxobutyl phosphate from D-ribulose 5-phosphate: step 1/1. In terms of biological role, catalyzes the conversion of D-ribulose 5-phosphate to formate and 3,4-dihydroxy-2-butanone 4-phosphate. The sequence is that of 3,4-dihydroxy-2-butanone 4-phosphate synthase from Haemophilus influenzae (strain ATCC 51907 / DSM 11121 / KW20 / Rd).